We begin with the raw amino-acid sequence, 375 residues long: Trichodiene synthase (375 aa).

It belongs to the trichodiene synthase family.

It catalyses the reaction (2E,6E)-farnesyl diphosphate = trichodiene + diphosphate. It participates in sesquiterpene biosynthesis; trichothecene biosynthesis. TS is a member of the terpene cyclase group of enzymes. It catalyzes the isomerization and cyclization of farnesyl pyro-phosphate to form trichodiene, the first cyclic intermediate in the biosynthetic pathway for trichothecenes. It serves to branch trichothecene biosynthesis from the isoprenoid pathway. The chain is Trichodiene synthase (TRI5) from Fusarium mesoamericanum.